Reading from the N-terminus, the 182-residue chain is Organic solute transporter subunit beta (182 aa).

Positions 1–20 are cleaved as a signal peptide; sequence MSGLLKYLFGCFILCLLLQG. Topologically, residues 21–64 are extracellular; it reads KTHMTSATISKPHETIDIEKQNMTGERNSTLAQQLSFPMEDPTN. Residues Asn42 and Asn48 are each glycosylated (N-linked (GlcNAc...) asparagine). Residues 65–85 traverse the membrane as a helical segment; it reads WNYAILALAFVVLFLAFLILA. Residues 86 to 182 are Cytoplasmic-facing; it reads QNSRANRTRK…LYTDSKEDDV (97 aa).

This sequence belongs to the OST-beta family. Interacts with slc51a. The Ost-alpha/Ost-beta complex is a heterodimer composed of alpha (slc51a) and beta (slc51b) subunit; may induce the transport of slc51a from the endoplasmic reticulum to the plasma membrane. In terms of tissue distribution, expressed in liver.

The protein localises to the cell membrane. Its function is as follows. Essential component of the Ost-alpha/Ost-beta complex, a heterodimer that acts as the intestinal basolateral transporter responsible for bile acid export from enterocytes into portal blood. Efficiently transports the major species of bile acids. May modulate slc51a glycosylation, membrane trafficking and stability activities. Able to transport taurocholate, estrone sulfate, digoxin, and prostaglandin E(2), but not p-aminohippurate or S-dinitrophenyl glutathione. This chain is Organic solute transporter subunit beta (slc51b), found in Leucoraja erinaceus (Little skate).